A 212-amino-acid polypeptide reads, in one-letter code: Uracil phosphoribosyltransferase (212 aa).

5-phospho-alpha-D-ribose 1-diphosphate-binding positions include R78, R103, and 130–138 (DPMLATGGS). Uracil is bound by residues I193 and 198-200 (GDA). D199 serves as a coordination point for 5-phospho-alpha-D-ribose 1-diphosphate.

Belongs to the UPRTase family. Requires Mg(2+) as cofactor.

It catalyses the reaction UMP + diphosphate = 5-phospho-alpha-D-ribose 1-diphosphate + uracil. It participates in pyrimidine metabolism; UMP biosynthesis via salvage pathway; UMP from uracil: step 1/1. Allosterically activated by GTP. Its function is as follows. Catalyzes the conversion of uracil and 5-phospho-alpha-D-ribose 1-diphosphate (PRPP) to UMP and diphosphate. The sequence is that of Uracil phosphoribosyltransferase from Pseudomonas entomophila (strain L48).